A 272-amino-acid polypeptide reads, in one-letter code: Cholesterol 25-hydroxylase (272 aa).

N-linked (GlcNAc...) asparagine glycosylation is present at asparagine 5. The next 3 membrane-spanning stretches (helical) occupy residues 38–58 (FFPV…FVVL), 84–104 (LLPC…PVTL), and 121–141 (LLLL…EFFV). In terms of domain architecture, Fatty acid hydroxylase spans 129-263 (LFCLLLFDME…FTHWDKILGT (135 aa)). The Histidine box-1 signature appears at 142-146 (WHLLH). A Histidine box-2 motif is present at residues 157 to 161 (HKVHH). 2 N-linked (GlcNAc...) asparagine glycosylation sites follow: asparagine 163 and asparagine 189. Residues 238-244 (HHDLHHS) carry the Histidine box-3 motif.

This sequence belongs to the sterol desaturase family. Requires Fe cation as cofactor. Post-translationally, N-glycosylated.

The protein localises to the endoplasmic reticulum membrane. The enzyme catalyses cholesterol + AH2 + O2 = 25-hydroxycholesterol + A + H2O. It carries out the reaction cholesterol + NADPH + O2 + H(+) = 25-hydroxycholesterol + NADP(+) + H2O. In terms of biological role, catalyzes the formation of 25-hydroxycholesterol from cholesterol, leading to repress cholesterol biosynthetic enzymes. Plays a key role in cell positioning and movement in lymphoid tissues: 25-hydroxycholesterol is an intermediate in biosynthesis of 7-alpha,25-dihydroxycholesterol (7-alpha,25-OHC), an oxysterol that acts as a ligand for the G protein-coupled receptor GPR183/EBI2, a chemotactic receptor for a number of lymphoid cells. May play an important role in regulating lipid metabolism by synthesizing a corepressor that blocks sterol regulatory element binding protein (SREBP) processing. As an interferon-stimulated gene, has broad antiviral activities against a wide range of enveloped viruses, such as vesicular stomatitis virus (VSV) and SARS coronavirus-2 (SARS-CoV-2). Its product, 25-hydroxycholesterol, activates the ER-localized enzyme ACAT to induce internalization of accessible cholesterol on the plasma membrane and restricts SARS-CoV-2 S protein-mediated fusion which inhibits virus replication. In testis, production of 25-hydroxycholesterol by macrophages plays a role in Leydig cell differentiation. Required to restrain inflammation in macrophages: production of 25-hydroxycholesterol protects macrophages from cholesterol overload, thereby preventing mitochondrial DNA release and subsequent activation of the AIM2 inflammasome. This chain is Cholesterol 25-hydroxylase, found in Homo sapiens (Human).